We begin with the raw amino-acid sequence, 498 residues long: Ammonium transporter 3 member 1 (498 aa).

11 helical membrane-spanning segments follow: residues 33–53 (ISAT…YGSI), 58–78 (WAVN…LCWV), 143–163 (MVYF…GSLL), 171–191 (WMLF…FSLW), 206–226 (GGYV…YWVG), 241–261 (VLLM…FNGG), 276–296 (NTNI…VIFF), 301–321 (VIGA…GAGL), 325–345 (WAAI…MMVV), 369–389 (GFLG…SLFL), and 412–432 (VAGA…VCLA). Residues 478 to 498 (DNNDTHHNNNKAAPSGVTQNV) are disordered. Polar residues predominate over residues 487–498 (NKAAPSGVTQNV).

It belongs to the ammonia transporter channel (TC 1.A.11.2) family. In terms of tissue distribution, expressed in root.

It is found in the membrane. In terms of biological role, involved in ammonium transport. In Oryza sativa subsp. japonica (Rice), this protein is Ammonium transporter 3 member 1 (AMT3-1).